The primary structure comprises 314 residues: Testis-specific Y-encoded protein 4 (314 aa).

The protein belongs to the nucleosome assembly protein (NAP) family.

It is found in the cytoplasm. The protein localises to the nucleus. Functionally, may be involved in sperm differentiation and proliferation. This is Testis-specific Y-encoded protein 4 (TSPY4) from Homo sapiens (Human).